The chain runs to 501 residues: 5-beta-cholestane-3-alpha,7-alpha-diol 12-alpha-hydroxylase (501 aa).

The chain crosses the membrane as a helical span at residues 1–21; it reads MVLWGPVLGVLLVAIVGYLCL. Serine 326 is subject to Phosphoserine. Residue cysteine 440 coordinates heme.

It belongs to the cytochrome P450 family. Requires heme as cofactor.

It localises to the endoplasmic reticulum membrane. The protein resides in the microsome membrane. It carries out the reaction 7alpha-hydroxycholest-4-en-3-one + reduced [NADPH--hemoprotein reductase] + O2 = 7alpha,12alpha-dihydroxycholest-4-en-3-one + oxidized [NADPH--hemoprotein reductase] + H2O + H(+). The enzyme catalyses 5beta-cholestane-3alpha,7alpha-diol + reduced [NADPH--hemoprotein reductase] + O2 = 5beta-cholestane-3alpha,7alpha,12alpha-triol + oxidized [NADPH--hemoprotein reductase] + H2O + H(+). It catalyses the reaction chenodeoxycholate + reduced [NADPH--hemoprotein reductase] + O2 = cholate + oxidized [NADPH--hemoprotein reductase] + H2O + H(+). It functions in the pathway lipid metabolism; bile acid biosynthesis. In terms of biological role, a cytochrome P450 monooxygenase involved in primary bile acid biosynthesis. Catalyzes the 12alpha-hydroxylation of 7alpha-hydroxy-4-cholesten-3-one, an intermediate metabolite in cholic acid biosynthesis. Controls biliary balance of cholic acid and chenodeoxycholic acid, ultimately regulating the intestinal absorption of dietary lipids. Mechanistically, uses molecular oxygen inserting one oxygen atom into a substrate, and reducing the second into a water molecule, with two electrons provided by NADPH via cytochrome P450 reductase (CPR; NADPH--hemoprotein reductase). This Sus scrofa (Pig) protein is 5-beta-cholestane-3-alpha,7-alpha-diol 12-alpha-hydroxylase (CYP8B1).